Consider the following 363-residue polypeptide: Type 3 secretion system translocon protein SctB (363 aa).

A helical membrane pass occupies residues 99-120 (ISSLSSNAVSLIISVAVLLSAL).

Belongs to the SctB/SipC family. In terms of assembly, the core secretion machinery of the T3SS is composed of approximately 20 different proteins, including cytoplasmic components, a base, an export apparatus and a needle. This subunit is involved in the formation of a pore, called the translocon, in host membrane.

It localises to the secreted. Its subcellular location is the host membrane. Component of the type III secretion system (T3SS), also called injectisome, which is used to inject bacterial effector proteins into eukaryotic host cells. IpaB/SctE and IpaC/SctB are inserted into the host membrane where they form a pore and allow the translocation of effector proteins into the cytosol of target cells. The protein is Type 3 secretion system translocon protein SctB of Shigella dysenteriae.